We begin with the raw amino-acid sequence, 317 residues long: MYTKIIGTGSYLPEQVRTNADLEKMVETSDEWIVTRTGIRERHIAAPNETVATMGFTAANRALEMAGIDKDQIGLIVVATTSATHAFPSAACQIQSMLGIKGCPAFDVAAACAGFTYALSIADQYVKSGAVKHALVVGSDVLARTCDPSDRGTIIIFGDGAGAVVLSASEEPGIISTHLHADGRYGELLTLPNADRVNPDNPIYLTMAGNEVFKVAVTELAHIVDETLAANNLDRSELDWLVPHQANLRIISATAKKLGMSMDNVVVTLDRHGNTSAASVPCALDEAVRDGRIKAGQLVLLEAFGGGFTWGSALIRF.

Residues Cys-112 and His-244 contribute to the active site. Residues 245–249 (QANLR) are ACP-binding. Asn-274 is an active-site residue.

This sequence belongs to the thiolase-like superfamily. FabH family. Homodimer.

The protein localises to the cytoplasm. The catalysed reaction is malonyl-[ACP] + acetyl-CoA + H(+) = 3-oxobutanoyl-[ACP] + CO2 + CoA. It functions in the pathway lipid metabolism; fatty acid biosynthesis. Functionally, catalyzes the condensation reaction of fatty acid synthesis by the addition to an acyl acceptor of two carbons from malonyl-ACP. Catalyzes the first condensation reaction which initiates fatty acid synthesis and may therefore play a role in governing the total rate of fatty acid production. Possesses both acetoacetyl-ACP synthase and acetyl transacylase activities. Its substrate specificity determines the biosynthesis of branched-chain and/or straight-chain of fatty acids. This is Beta-ketoacyl-[acyl-carrier-protein] synthase III from Salmonella arizonae (strain ATCC BAA-731 / CDC346-86 / RSK2980).